The chain runs to 470 residues: Poly(A) polymerase catalytic subunit (470 aa).

Residues Asp192 and Asp194 contribute to the active site.

The protein belongs to the poxviridae poly(A) polymerase catalytic subunit family. In terms of assembly, heterodimer of a large (catalytic) subunit and a small (regulatory) subunit.

The catalysed reaction is RNA(n) + ATP = RNA(n)-3'-adenine ribonucleotide + diphosphate. Functionally, polymerase that creates the 3'-poly(A) tail of mRNA's. The chain is Poly(A) polymerase catalytic subunit (PAPL) from Molluscum contagiosum virus subtype 1 (MOCV).